Here is a 197-residue protein sequence, read N- to C-terminus: uncharacterized protein (197 aa).

The N-terminal stretch at 1 to 23 is a signal peptide; it reads MSARAPKELRLALPPCLLNRTFA. N19 and N26 each carry an N-linked (GlcNAc...) asparagine glycan. The Extracellular portion of the chain corresponds to 24 to 61; that stretch reads SPNASGSGNTGARGPGAGGSGTCITQVGQQLFQSFSST. The chain crosses the membrane as a helical span at residues 62 to 82; sequence LVLIVLVTLIFCLIVLSLSTF. Residues 83–197 are Cytoplasmic-facing; it reads HIHKRRMKKR…EGLLQTVVLS (115 aa). Positions 94 to 180 are disordered; that stretch reads MQRAQEEYER…SSPQGAHAAS (87 aa). Composition is skewed to basic and acidic residues over residues 96–107 and 125–136; these read RAQEEYERDHCS and HTKETRLERQPR. Over residues 147–161 the composition is skewed to low complexity; the sequence is SSSSSSSPGLLCQGP. The span at 162-171 shows a compositional bias: pro residues; the sequence is CAPPPPPPAS.

The protein localises to the membrane. This is an uncharacterized protein from Macaca fascicularis (Crab-eating macaque).